Here is a 79-residue protein sequence, read N- to C-terminus: Panulirin (79 aa).

Positions 1–22 (MKNKAVLMLMALFLVAVTQVHG) are cleaved as a signal peptide. A propeptide spanning residues 23–26 (DPEP) is cleaved from the precursor. 3 disulfides stabilise this stretch: C33–C63, C40–C56, and C46–C64. Residues 75–79 (QLLAA) constitute a propeptide that is removed on maturation.

In terms of assembly, monomer. Post-translationally, contains 3 disulfide bonds. As to expression, expressed in hemocytes (at protein level).

Involved in the melanization cascade in response to lipopolysaccharide (LPS). In vitro, reversibly and competitively inhibits trypsin (Ki=8.6 nM) but not serine proteases chymotrypsin, elastase, subtilisin, thrombin and plasmin, cysteine peptidase papain or metallopeptidase carboxypeptidase A. In Panulirus argus (Caribbean spiny lobster), this protein is Panulirin.